Reading from the N-terminus, the 674-residue chain is ATP-citrate synthase subunit 1 (674 aa).

A compositionally biased stretch (low complexity) spans 1–10 (MPSATSTNGA). Positions 1–26 (MPSATSTNGANGNGNGNGASASPAPG) are disordered. ATP is bound by residues 261-281 (LLRY…EVGG) and 312-338 (FKTE…KNKS). Residue E278 coordinates Mg(2+). Residue H320 is the Tele-phosphohistidine intermediate of the active site. 339–349 (MREAGFYVPDT) is a binding site for CoA.

The protein belongs to the succinate/malate CoA ligase alpha subunit family. In terms of assembly, composed of two subunits.

It localises to the cytoplasm. The catalysed reaction is oxaloacetate + acetyl-CoA + ADP + phosphate = citrate + ATP + CoA. Catalyzes the formation of cytosolic acetyl-CoA, which is mainly used for the biosynthesis of fatty acids and sterols. This is ATP-citrate synthase subunit 1 (ACL1) from Sordaria macrospora (strain ATCC MYA-333 / DSM 997 / K(L3346) / K-hell).